The chain runs to 409 residues: Argininosuccinate synthase (409 aa).

Residues 13–21 and Ala40 each bind ATP; that span reads AYSGGLDTS. Residues Tyr91 and Ser96 each contribute to the L-citrulline site. Gly121 lines the ATP pocket. Thr123, Asn127, and Asp128 together coordinate L-aspartate. Asn127 contacts L-citrulline. Arg131, Ser183, Ser192, Glu268, and Tyr280 together coordinate L-citrulline.

This sequence belongs to the argininosuccinate synthase family. Type 1 subfamily. As to quaternary structure, homotetramer.

Its subcellular location is the cytoplasm. It carries out the reaction L-citrulline + L-aspartate + ATP = 2-(N(omega)-L-arginino)succinate + AMP + diphosphate + H(+). It participates in amino-acid biosynthesis; L-arginine biosynthesis; L-arginine from L-ornithine and carbamoyl phosphate: step 2/3. This is Argininosuccinate synthase from Saccharophagus degradans (strain 2-40 / ATCC 43961 / DSM 17024).